The chain runs to 387 residues: Phosphoglycerate kinase (387 aa).

Residues 21-23 (DLN), Arg-36, 59-62 (HLGR), Arg-113, and Arg-146 contribute to the substrate site. ATP contacts are provided by residues Lys-197, Glu-314, and 340–343 (GGDT).

The protein belongs to the phosphoglycerate kinase family. Monomer.

The protein localises to the cytoplasm. It carries out the reaction (2R)-3-phosphoglycerate + ATP = (2R)-3-phospho-glyceroyl phosphate + ADP. It participates in carbohydrate degradation; glycolysis; pyruvate from D-glyceraldehyde 3-phosphate: step 2/5. This is Phosphoglycerate kinase from Pseudomonas savastanoi pv. phaseolicola (strain 1448A / Race 6) (Pseudomonas syringae pv. phaseolicola (strain 1448A / Race 6)).